A 203-amino-acid polypeptide reads, in one-letter code: SPbeta prophage-derived uncharacterized lipoprotein YonS (203 aa).

The first 21 residues, 1-21, serve as a signal peptide directing secretion; the sequence is MKLFKKLGILLLITSLILLAA. The N-palmitoyl cysteine moiety is linked to residue Cys-22. Cys-22 carries S-diacylglycerol cysteine lipidation. Low complexity predominate over residues 27–46; the sequence is ESSSSSEDTNNATDTNTSES. Residues 27–57 form a disordered region; it reads ESSSSSEDTNNATDTNTSESQDISVNGPEKV.

Its subcellular location is the cell membrane. The chain is SPbeta prophage-derived uncharacterized lipoprotein YonS (yonS) from Bacillus subtilis (strain 168).